The following is a 615-amino-acid chain: Elongation factor 4 (615 aa).

One can recognise a tr-type G domain in the interval alanine 17 to valine 198. GTP contacts are provided by residues aspartate 29–threonine 34 and asparagine 145–aspartate 148.

Belongs to the TRAFAC class translation factor GTPase superfamily. Classic translation factor GTPase family. LepA subfamily.

It is found in the cell membrane. The catalysed reaction is GTP + H2O = GDP + phosphate + H(+). Required for accurate and efficient protein synthesis under certain stress conditions. May act as a fidelity factor of the translation reaction, by catalyzing a one-codon backward translocation of tRNAs on improperly translocated ribosomes. Back-translocation proceeds from a post-translocation (POST) complex to a pre-translocation (PRE) complex, thus giving elongation factor G a second chance to translocate the tRNAs correctly. Binds to ribosomes in a GTP-dependent manner. The protein is Elongation factor 4 of Clavibacter michiganensis subsp. michiganensis (strain NCPPB 382).